The following is a 513-amino-acid chain: Plexin domain-containing protein 2 (513 aa).

The N-terminal stretch at 1 to 24 is a signal peptide; that stretch reads MGARSESLVGVVLLFQLLADRLWC. Residues 25-438 are Extracellular-facing; it reads AATASDSLYD…AEMKTGTLHT (414 aa). N-linked (GlcNAc...) asparagine glycosylation is found at Asn-88, Asn-145, Asn-198, Asn-206, Asn-222, and Asn-330. Residues 312–357 form the PSI domain; it reads TCLQFNSCSSCVSSMIGFNCSWCNIPQRCSSGFDRHRQDWVENGCT. A helical membrane pass occupies residues 439–459; the sequence is GLIIGILILVLLIITAILVAV. Residues 460-513 are Cytoplasmic-facing; that stretch reads YMYHHPTSSASLFLIERRPSRWPAMKFRRGSGHPAYAEVEPIGEKEGFIVSEQC.

It belongs to the plexin family.

It localises to the membrane. This Xenopus laevis (African clawed frog) protein is Plexin domain-containing protein 2 (plxdc2).